A 1061-amino-acid chain; its full sequence is Carbamoyl phosphate synthase large chain (1061 aa).

The interval 1–401 (MPKRTDVHKI…ALQKAVRSLE (401 aa)) is carboxyphosphate synthetic domain. ATP contacts are provided by Arg-129, Arg-169, Gly-175, Gly-176, Lys-208, Ile-210, Glu-215, Gly-241, Ile-242, His-243, Gln-284, and Glu-298. Residues 133–327 (KDLMQELNEP…IAKLAAKIAV (195 aa)) enclose the ATP-grasp 1 domain. Mg(2+)-binding residues include Gln-284, Glu-298, and Asn-300. Mn(2+) contacts are provided by Gln-284, Glu-298, and Asn-300. Positions 402-546 (IDEKDLISAK…YSSYDLENES (145 aa)) are oligomerization domain. The segment at 547-929 (KKSDKKSVLV…ALYKAFTGAK (383 aa)) is carbamoyl phosphate synthetic domain. The ATP-grasp 2 domain maps to 671–861 (DQTIKNLGLK…MAQVATRVIL (191 aa)). ATP contacts are provided by Arg-707, Ala-746, Leu-748, Glu-752, Gly-777, Val-778, His-779, Ser-780, Gln-820, and Glu-832. Residues Gln-820, Glu-832, and Asn-834 each contribute to the Mg(2+) site. Gln-820, Glu-832, and Asn-834 together coordinate Mn(2+). The MGS-like domain maps to 930–1061 (MELPDNGNVL…ENRSFATNSL (132 aa)). An allosteric domain region spans residues 930–1061 (MELPDNGNVL…ENRSFATNSL (132 aa)).

Belongs to the CarB family. Composed of two chains; the small (or glutamine) chain promotes the hydrolysis of glutamine to ammonia, which is used by the large (or ammonia) chain to synthesize carbamoyl phosphate. Tetramer of heterodimers (alpha,beta)4. Mg(2+) serves as cofactor. Mn(2+) is required as a cofactor.

It carries out the reaction hydrogencarbonate + L-glutamine + 2 ATP + H2O = carbamoyl phosphate + L-glutamate + 2 ADP + phosphate + 2 H(+). The enzyme catalyses hydrogencarbonate + NH4(+) + 2 ATP = carbamoyl phosphate + 2 ADP + phosphate + 2 H(+). The protein operates within amino-acid biosynthesis; L-arginine biosynthesis; carbamoyl phosphate from bicarbonate: step 1/1. It functions in the pathway pyrimidine metabolism; UMP biosynthesis via de novo pathway; (S)-dihydroorotate from bicarbonate: step 1/3. Functionally, large subunit of the glutamine-dependent carbamoyl phosphate synthetase (CPSase). CPSase catalyzes the formation of carbamoyl phosphate from the ammonia moiety of glutamine, carbonate, and phosphate donated by ATP, constituting the first step of 2 biosynthetic pathways, one leading to arginine and/or urea and the other to pyrimidine nucleotides. The large subunit (synthetase) binds the substrates ammonia (free or transferred from glutamine from the small subunit), hydrogencarbonate and ATP and carries out an ATP-coupled ligase reaction, activating hydrogencarbonate by forming carboxy phosphate which reacts with ammonia to form carbamoyl phosphate. The chain is Carbamoyl phosphate synthase large chain from Ligilactobacillus salivarius (strain UCC118) (Lactobacillus salivarius).